The sequence spans 208 residues: Small ribosomal subunit protein uS3 (208 aa).

One can recognise a KH type-2 domain in the interval 17 to 86; sequence IDEYLEKELR…NPQIEVEEIK (70 aa).

Belongs to the universal ribosomal protein uS3 family. In terms of assembly, part of the 30S ribosomal subunit.

Its function is as follows. Binds the lower part of the 30S subunit head. The protein is Small ribosomal subunit protein uS3 of Thermococcus onnurineus (strain NA1).